We begin with the raw amino-acid sequence, 226 residues long: uncharacterized protein (226 aa).

An HTH arsR-type domain is found at 1–92; it reads MNPNIAKISS…QLLHIAPKAK (92 aa). A DNA-binding region (H-T-H motif) is located at residues 32 to 55; it reads AGELAYLANIKPQTASFHLNKLLE.

This is an uncharacterized protein from Bacillus subtilis (strain 168).